Consider the following 353-residue polypeptide: Photosystem II protein D1 (353 aa).

Helical transmembrane passes span tyrosine 29 to isoleucine 46, histidine 118 to leucine 133, and tryptophan 142 to alanine 156. Position 118 (histidine 118) interacts with chlorophyll a. Tyrosine 126 is a binding site for pheophytin a. 2 residues coordinate [CaMn4O5] cluster: aspartate 170 and glutamate 189. Residues phenylalanine 197 to leucine 218 traverse the membrane as a helical segment. Histidine 198 serves as a coordination point for chlorophyll a. Residues histidine 215 and serine 264–phenylalanine 265 contribute to the a quinone site. Histidine 215 contacts Fe cation. A Fe cation-binding site is contributed by histidine 272. A helical transmembrane segment spans residues phenylalanine 274–leucine 288. [CaMn4O5] cluster contacts are provided by histidine 332, glutamate 333, aspartate 342, and alanine 344. A propeptide spanning residues alanine 345 to glycine 353 is cleaved from the precursor.

Belongs to the reaction center PufL/M/PsbA/D family. PSII is composed of 1 copy each of membrane proteins PsbA, PsbB, PsbC, PsbD, PsbE, PsbF, PsbH, PsbI, PsbJ, PsbK, PsbL, PsbM, PsbT, PsbX, PsbY, PsbZ, Psb30/Ycf12, peripheral proteins PsbO, CyanoQ (PsbQ), PsbU, PsbV and a large number of cofactors. It forms dimeric complexes. The D1/D2 heterodimer binds P680, chlorophylls that are the primary electron donor of PSII, and subsequent electron acceptors. It shares a non-heme iron and each subunit binds pheophytin, quinone, additional chlorophylls, carotenoids and lipids. D1 provides most of the ligands for the Mn4-Ca-O5 cluster of the oxygen-evolving complex (OEC). There is also a Cl(-1) ion associated with D1 and D2, which is required for oxygen evolution. The PSII complex binds additional chlorophylls, carotenoids and specific lipids. serves as cofactor. In terms of processing, tyr-161 forms a radical intermediate that is referred to as redox-active TyrZ, YZ or Y-Z. Post-translationally, C-terminally processed by CtpA; processing is essential to allow assembly of the oxygen-evolving complex and thus photosynthetic growth.

Its subcellular location is the cellular thylakoid membrane. It carries out the reaction 2 a plastoquinone + 4 hnu + 2 H2O = 2 a plastoquinol + O2. Its function is as follows. Photosystem II (PSII) is a light-driven water:plastoquinone oxidoreductase that uses light energy to abstract electrons from H(2)O, generating O(2) and a proton gradient subsequently used for ATP formation. It consists of a core antenna complex that captures photons, and an electron transfer chain that converts photonic excitation into a charge separation. The D1/D2 (PsbA/PsbD) reaction center heterodimer binds P680, the primary electron donor of PSII as well as several subsequent electron acceptors. In Prochlorothrix hollandica, this protein is Photosystem II protein D1.